The chain runs to 598 residues: Elongation factor 4 (598 aa).

The tr-type G domain maps to 4 to 186 (SRLRNFSIIA…EIVKKIPPPK (183 aa)). Residues 16 to 21 (DHGKST) and 133 to 136 (NKID) each bind GTP.

It belongs to the TRAFAC class translation factor GTPase superfamily. Classic translation factor GTPase family. LepA subfamily.

It is found in the cell inner membrane. It carries out the reaction GTP + H2O = GDP + phosphate + H(+). In terms of biological role, required for accurate and efficient protein synthesis under certain stress conditions. May act as a fidelity factor of the translation reaction, by catalyzing a one-codon backward translocation of tRNAs on improperly translocated ribosomes. Back-translocation proceeds from a post-translocation (POST) complex to a pre-translocation (PRE) complex, thus giving elongation factor G a second chance to translocate the tRNAs correctly. Binds to ribosomes in a GTP-dependent manner. In Pelobacter propionicus (strain DSM 2379 / NBRC 103807 / OttBd1), this protein is Elongation factor 4.